The following is a 159-amino-acid chain: UPF0178 protein AZC_4000 (159 aa).

It belongs to the UPF0178 family.

This Azorhizobium caulinodans (strain ATCC 43989 / DSM 5975 / JCM 20966 / LMG 6465 / NBRC 14845 / NCIMB 13405 / ORS 571) protein is UPF0178 protein AZC_4000.